A 240-amino-acid polypeptide reads, in one-letter code: tRNA (guanine-N(1)-)-methyltransferase (240 aa).

S-adenosyl-L-methionine contacts are provided by residues G108 and 127 to 132 (IGDYVL).

It belongs to the RNA methyltransferase TrmD family. As to quaternary structure, homodimer.

It is found in the cytoplasm. The enzyme catalyses guanosine(37) in tRNA + S-adenosyl-L-methionine = N(1)-methylguanosine(37) in tRNA + S-adenosyl-L-homocysteine + H(+). Its function is as follows. Specifically methylates guanosine-37 in various tRNAs. The chain is tRNA (guanine-N(1)-)-methyltransferase from Lactobacillus johnsonii (strain CNCM I-12250 / La1 / NCC 533).